The chain runs to 135 residues: Salivary protein 15 Iper-1 (135 aa).

Positions 1 to 22 are cleaved as a signal peptide; it reads MESFVAMKVVCILFLFVVAAEA. 2 N-linked (GlcNAc...) asparagine glycosylation sites follow: N93 and N104. The interval 116–135 is CD4-binding; sequence GPNKQTCADKSKCVGHIPGC.

It belongs to the salp15 family. As to quaternary structure, interacts with host CD4. Interacts with host DC-SIGN (CD209). In terms of assembly, (Microbial infection) Interacts with Borrelia outer surface protein C (OspC). As to expression, expressed in salivary glands from feeding female ticks. Highly expressed 4 days after start of feeding.

It is found in the secreted. Salivary tick protein that downregulates host immune system by binding to both dendritic cells, and CD4(+) T cells. Specifically binds to the CD4 coreceptor on T cells. This interaction prevents the activation of the Src kinase, Lck, and its downstream substrate Zap-70, and results in deficient activation of PLCgamma1, the repression of calcium fluxes triggered by T-cell antigen receptor (TCR) ligation, and a subsequent reduction in interleukin-2 production. This salivary protein also binds to DC-SIGN (CD209) on dendritic cells (DC) and activates the Raf-1 kinase/MEK signaling pathway that results in down-regulating expression of pro-inflammatory cytokines. Furthermore, it inhibits T cell proliferation induced by DCs. It also inhibits in vitro keratinocyte inflammation induced by Borrelia burgdorferi or by the major outer surface protein (OspC) of Borrelia. In addition, it downregulates chemokines and monocyte chemoattractant protein 1, as well as several antimicrobial peptides such as defensins, cathelicidin, psoriasin, and RNase 7. Apart from its immunomodulatory activities, it is also associated with protection of Borrelia spirochetes from antibody-mediated killing through its binding to OspC. In vivo, tests on different immune disease animal models show promising therapeutic results, e.g., in inhibiting HIV infection, experimental autoimmune encephalomyelitis, transplantation rejection, and asthma. Functionally, (Microbial infection) Protects Borrelia garinii from anti-Borrelia antibody-mediated cytotoxicity in vitro. May facilitate B.garinii transmission in mouse model. In terms of biological role, (Microbial infection) Protects Borrelia burgdorferi from anti-Borrelia antibody-mediated cytotoxicity in vitro. Its function is as follows. (Microbial infection) Protects Borrelia afzelii from anti-Borrelia antibody-mediated cytotoxicity in vitro. The protein is Salivary protein 15 Iper-1 of Ixodes persulcatus (Taiga tick).